The following is a 348-amino-acid chain: D-alanine--D-alanine ligase (348 aa).

In terms of domain architecture, ATP-grasp spans 132-334; the sequence is KRVLESAGIP…YAELIEELVR (203 aa). Residue 162-217 participates in ATP binding; the sequence is EAALSYPVFVKPANMGSSVGISKAESEEELRAAILLALTYDSRILIEQGVLAREIE. Mg(2+) is bound by residues aspartate 288, glutamate 301, and asparagine 303.

It belongs to the D-alanine--D-alanine ligase family. Mg(2+) serves as cofactor. Requires Mn(2+) as cofactor.

It is found in the cytoplasm. The enzyme catalyses 2 D-alanine + ATP = D-alanyl-D-alanine + ADP + phosphate + H(+). Its pathway is cell wall biogenesis; peptidoglycan biosynthesis. Cell wall formation. This is D-alanine--D-alanine ligase from Streptococcus equi subsp. zooepidemicus (strain H70).